A 483-amino-acid polypeptide reads, in one-letter code: ATP-dependent RNA helicase DDX25 (483 aa).

The Nuclear export signal motif lies at 61-74 (LAANSLLNKLIHQS). Residues 97–125 (KTFEELRLKEELLKGIYAMGFNRPSKIQE) carry the Q motif motif. The short motif at 100-114 (EELRLKEELLKGIYA) is the Nuclear localization signal element. One can recognise a Helicase ATP-binding domain in the interval 130-300 (MMLAHPPQNL…ERIIPDPNVI (171 aa)). An ATP-binding site is contributed by 143 to 150 (SQSGTGKT). A DEAD box motif is present at residues 247-250 (DEAD). A Helicase C-terminal domain is found at 311–478 (NIRQYYVLCE…QLNAEDMDEI (168 aa)).

Belongs to the DEAD box helicase family. Post-translationally, phosphorylated on threonine residues. The phosphorylated form is found in the cytoplasm but not in the nucleus. In terms of tissue distribution, highly expressed in the Leydig and germ cells of the testis and weakly expressed in the pituitary and hypothalamus.

The protein resides in the cytoplasm. The protein localises to the nucleus. The enzyme catalyses ATP + H2O = ADP + phosphate + H(+). In terms of biological role, ATP-dependent RNA helicase. Required for mRNA export and translation regulation during spermatid development. This chain is ATP-dependent RNA helicase DDX25 (DDX25), found in Homo sapiens (Human).